Here is a 343-residue protein sequence, read N- to C-terminus: Lipase chaperone (343 aa).

The chain crosses the membrane as a helical span at residues 7–27; it reads IYLGIGLVALLMIFIYWLMPK.

This sequence belongs to the lipase chaperone family.

It is found in the cell inner membrane. In terms of biological role, may be involved in the folding of the extracellular lipase during its passage through the periplasm. This Acinetobacter baylyi (strain ATCC 33305 / BD413 / ADP1) protein is Lipase chaperone (lifO).